The chain runs to 260 residues: Carbonic anhydrase 2 (260 aa).

Ser2 bears the N-acetylserine mark. Ser2 is subject to Phosphoserine. An Alpha-carbonic anhydrase domain is found at 3–259 (HHWGYSKSNG…LKNRKIKASF (257 aa)). The segment at 16 to 39 (WHKEFPIANGDRQSPVDIDTGTAQ) is disordered. His64 serves as the catalytic Proton donor/acceptor. Ser87 is subject to Phosphoserine. 3 residues coordinate Zn(2+): His94, His96, and His119. Ser165 is modified (phosphoserine). 198-199 (TT) serves as a coordination point for substrate. The residue at position 232 (Ser232) is a Phosphoserine.

This sequence belongs to the alpha-carbonic anhydrase family. As to quaternary structure, interacts with SLC4A4 and SLC26A6. Interaction with SLC4A7 regulates SLC4A7 transporter activity. The cofactor is Zn(2+).

The protein resides in the cytoplasm. Its subcellular location is the cell membrane. It catalyses the reaction hydrogencarbonate + H(+) = CO2 + H2O. It carries out the reaction urea = cyanamide + H2O. Inhibited by acetazolamide. In terms of biological role, catalyzes the reversible hydration of carbon dioxide. Can also hydrate cyanamide to urea. Involved in the regulation of fluid secretion into the anterior chamber of the eye. Essential for bone resorption and osteoclast differentiation. Contributes to intracellular pH regulation in the duodenal upper villous epithelium during proton-coupled peptide absorption. Stimulates the chloride-bicarbonate exchange activity of SLC26A6. In Rattus norvegicus (Rat), this protein is Carbonic anhydrase 2 (Ca2).